The chain runs to 320 residues: Transcription factor bHLH34 (320 aa).

Positions 162–213 constitute a bHLH domain; it reads SKPGTKACREKLRREKLNDKFMDLSSVLEPGRTPKTDKSAILDDAIRVVNQL. A disordered region spans residues 299 to 320; that stretch reads WSPLPPADRDTSRDLKNLPPVA. Positions 305-314 are enriched in basic and acidic residues; sequence ADRDTSRDLK.

Homodimer. In terms of tissue distribution, expressed constitutively in roots, leaves, stems, and flowers.

It localises to the nucleus. The polypeptide is Transcription factor bHLH34 (BHLH34) (Arabidopsis thaliana (Mouse-ear cress)).